A 404-amino-acid polypeptide reads, in one-letter code: NADH-quinone oxidoreductase subunit D 1 (404 aa).

It belongs to the complex I 49 kDa subunit family. As to quaternary structure, NDH-1 is composed of 14 different subunits. Subunits NuoB, C, D, E, F, and G constitute the peripheral sector of the complex.

The protein localises to the cell inner membrane. The enzyme catalyses a quinone + NADH + 5 H(+)(in) = a quinol + NAD(+) + 4 H(+)(out). Functionally, NDH-1 shuttles electrons from NADH, via FMN and iron-sulfur (Fe-S) centers, to quinones in the respiratory chain. The immediate electron acceptor for the enzyme in this species is believed to be ubiquinone. Couples the redox reaction to proton translocation (for every two electrons transferred, four hydrogen ions are translocated across the cytoplasmic membrane), and thus conserves the redox energy in a proton gradient. This chain is NADH-quinone oxidoreductase subunit D 1, found in Sorangium cellulosum (strain So ce56) (Polyangium cellulosum (strain So ce56)).